A 121-amino-acid chain; its full sequence is Large ribosomal subunit protein bL17 (121 aa).

Belongs to the bacterial ribosomal protein bL17 family. Part of the 50S ribosomal subunit. Contacts protein L32.

The chain is Large ribosomal subunit protein bL17 from Metamycoplasma arthritidis (strain 158L3-1) (Mycoplasma arthritidis).